The chain runs to 135 residues: Large ribosomal subunit protein uL16c (135 aa).

Belongs to the universal ribosomal protein uL16 family. Part of the 50S ribosomal subunit.

The protein localises to the plastid. Its subcellular location is the chloroplast. This is Large ribosomal subunit protein uL16c from Eucalyptus globulus subsp. globulus (Tasmanian blue gum).